Here is a 307-residue protein sequence, read N- to C-terminus: MATH domain and coiled-coil domain-containing protein At3g58380 (307 aa).

Residues 6–132 form the MATH domain; that stretch reads DKKFVWVIKD…CREITIVIEV (127 aa). Residues 238-290 adopt a coiled-coil conformation; that stretch reads KVDWLEKKLKEVKEKKKNVDNGKARLQQIEEDLQKLNQKRLDLKDILDKEKAN.

This Arabidopsis thaliana (Mouse-ear cress) protein is MATH domain and coiled-coil domain-containing protein At3g58380.